A 291-amino-acid chain; its full sequence is Protein/nucleic acid deglycase HchA (291 aa).

Over residues 1-18 (MSNERDTSRTPTPDHAEH) the composition is skewed to basic and acidic residues. A disordered region spans residues 1–20 (MSNERDTSRTPTPDHAEHNA). Catalysis depends on Cys188, which acts as the Nucleophile.

This sequence belongs to the peptidase C56 family. HchA subfamily.

The protein localises to the cytoplasm. It catalyses the reaction N(omega)-(1-hydroxy-2-oxopropyl)-L-arginyl-[protein] + H2O = lactate + L-arginyl-[protein] + H(+). The enzyme catalyses N(6)-(1-hydroxy-2-oxopropyl)-L-lysyl-[protein] + H2O = lactate + L-lysyl-[protein] + H(+). The catalysed reaction is S-(1-hydroxy-2-oxopropyl)-L-cysteinyl-[protein] + H2O = lactate + L-cysteinyl-[protein] + H(+). It carries out the reaction N(omega)-(1-hydroxy-2-oxoethyl)-L-arginyl-[protein] + H2O = L-arginyl-[protein] + glycolate + H(+). It catalyses the reaction N(6)-(1-hydroxy-2-oxoethyl)-L-lysyl-[protein] + H2O = glycolate + L-lysyl-[protein] + H(+). The enzyme catalyses S-(1-hydroxy-2-oxoethyl)-L-cysteinyl-[protein] + H2O = glycolate + L-cysteinyl-[protein] + H(+). The catalysed reaction is N(2)-(1-hydroxy-2-oxopropyl)-dGTP + H2O = lactate + dGTP + H(+). It carries out the reaction N(2)-(1-hydroxy-2-oxopropyl)-GTP + H2O = lactate + GTP + H(+). It catalyses the reaction N(2)-(1-hydroxy-2-oxopropyl)-GDP + H2O = lactate + GDP + H(+). The enzyme catalyses N(2)-(1-hydroxy-2-oxopropyl)-GMP + H2O = lactate + GMP + H(+). The catalysed reaction is N(2)-(1-hydroxy-2-oxoethyl)-dGTP + H2O = dGTP + glycolate + H(+). It carries out the reaction N(2)-(1-hydroxy-2-oxoethyl)-GTP + H2O = glycolate + GTP + H(+). It catalyses the reaction N(2)-(1-hydroxy-2-oxoethyl)-GDP + H2O = glycolate + GDP + H(+). The enzyme catalyses N(2)-(1-hydroxy-2-oxoethyl)-GMP + H2O = glycolate + GMP + H(+). The catalysed reaction is an N(2)-(1-hydroxy-2-oxopropyl)-guanosine in RNA + H2O = a guanosine in RNA + lactate + H(+). It carries out the reaction an N(2)-(1-hydroxy-2-oxopropyl)-2'-deoxyguanosine in DNA + H2O = a 2'-deoxyguanosine in DNA + lactate + H(+). It catalyses the reaction an N(2)-(1-hydroxy-2-oxoethyl)-guanosine in RNA + H2O = a guanosine in RNA + glycolate + H(+). The enzyme catalyses an N(2)-(1-hydroxy-2-oxoethyl)-2'-deoxyguanosine in DNA + H2O = a 2'-deoxyguanosine in DNA + glycolate + H(+). Protein and nucleotide deglycase that catalyzes the deglycation of the Maillard adducts formed between amino groups of proteins or nucleotides and reactive carbonyl groups of glyoxals. Thus, functions as a protein deglycase that repairs methylglyoxal- and glyoxal-glycated proteins, and releases repaired proteins and lactate or glycolate, respectively. Deglycates cysteine, arginine and lysine residues in proteins, and thus reactivates these proteins by reversing glycation by glyoxals. Acts on early glycation intermediates (hemithioacetals and aminocarbinols), preventing the formation of Schiff bases and advanced glycation endproducts (AGE). Also functions as a nucleotide deglycase able to repair glycated guanine in the free nucleotide pool (GTP, GDP, GMP, dGTP) and in DNA and RNA. Is thus involved in a major nucleotide repair system named guanine glycation repair (GG repair), dedicated to reversing methylglyoxal and glyoxal damage via nucleotide sanitization and direct nucleic acid repair. Plays an important role in protecting cells from carbonyl stress. This Pseudomonas aeruginosa (strain LESB58) protein is Protein/nucleic acid deglycase HchA.